The following is a 259-amino-acid chain: DNA-directed RNA polymerase 30 kDa polypeptide (259 aa).

Residues 155-195 (YNTPCPNCKSRNTTPMMIQTRAADEPPLVRHACRDCKQHFK) form a TFIIS-type zinc finger. Zn(2+) contacts are provided by Cys-159, Cys-162, Cys-187, and Cys-190. The segment at 220-259 (EILPDNNPSPPESPEPASPIDDGLIRVTFDRNDEPPEDDE) is disordered. A compositionally biased stretch (pro residues) spans 226 to 236 (NPSPPESPEPA).

Belongs to the poxviridae DNA-directed RNA polymerase 30 kDa subunit family. As to quaternary structure, the DNA-dependent RNA polymerase (vRNAP) consists of eight subunits encoded by early viral genes and termed according to their apparent molecular masses Rpo147, Rpo132, Rpo35, Rpo30, Rpo22, Rpo19, Rpo18, and Rpo7. The same holoenzyme, with the addition of the transcription-specificity factor RAP94, is used for early gene expression.

It is found in the virion. The protein localises to the host cytoplasm. The catalysed reaction is RNA(n) + a ribonucleoside 5'-triphosphate = RNA(n+1) + diphosphate. Functionally, part of the DNA-dependent RNA polymerase which catalyzes the transcription of viral DNA into RNA using the four ribonucleoside triphosphates as substrates. Responsible for the transcription of early, intermediate and late genes. DNA-dependent RNA polymerase associates with the early transcription factor (ETF), itself composed of OPG118 and OPG134, thereby allowing the early genes transcription. Late transcription, and probably also intermediate transcription, require newly synthesized RNA polymerase. The sequence is that of DNA-directed RNA polymerase 30 kDa polypeptide (OPG066) from Variola virus (isolate Human/India/Ind3/1967) (VARV).